Consider the following 608-residue polypeptide: AAA ATPase forming ring-shaped complexes (608 aa).

Residues 45-79 (AQEYDAVLRRLSAAEATRDNMSRQIRGAGEKNRKL) are a coiled coil. An ATP-binding site is contributed by 302–307 (GNGKTM).

This sequence belongs to the AAA ATPase family. In terms of assembly, homohexamer. Assembles into a hexameric ring structure.

The sequence is that of AAA ATPase forming ring-shaped complexes from Rothia mucilaginosa (strain DY-18) (Stomatococcus mucilaginosus).